A 194-amino-acid chain; its full sequence is uncharacterized protein (194 aa).

The SIS domain occupies 34 to 192 (VMQCLLGGNK…CELVDQTLFP (159 aa)).

This sequence belongs to the SIS family. DiaA subfamily.

This is an uncharacterized protein from Haemophilus influenzae (strain ATCC 51907 / DSM 11121 / KW20 / Rd).